We begin with the raw amino-acid sequence, 284 residues long: MAQRDTGGRLGAEFFTPGDSSFTAFLAAHRPALLSTRGLLPDGVRAAPDRVPHGTTVLALAYRDGVLIAGDRRATMGNLIAQRDLEKVHPADDYTAVAFAGTVGLALDMVKLYQVELAHFEKVEGVPMTLRAKATRLAGMIRQNLGQAMQGLAVVPLLVGYDLAARAGEHGRIFSFDVTGGPYEKTDFHAEGSGSPYARGALKKLFHPGMSRREAALAALQALYDAADDDSATGGPDISRRIFPVVSVITEDGFERLPESETEDLSREMVEQRHTRPDGPTAAM.

Residues 1-54 (MAQRDTGGRLGAEFFTPGDSSFTAFLAAHRPALLSTRGLLPDGVRAAPDRVPHG) constitute a propeptide, removed in mature form; by autocatalysis. The active-site Nucleophile is the Thr-55. The segment covering 256–277 (RLPESETEDLSREMVEQRHTRP) has biased composition (basic and acidic residues). The tract at residues 256-284 (RLPESETEDLSREMVEQRHTRPDGPTAAM) is disordered.

This sequence belongs to the peptidase T1B family. In terms of assembly, the 20S proteasome core is composed of 14 alpha and 14 beta subunits that assemble into four stacked heptameric rings, resulting in a barrel-shaped structure. The two inner rings, each composed of seven catalytic beta subunits, are sandwiched by two outer rings, each composed of seven alpha subunits. The catalytic chamber with the active sites is on the inside of the barrel. Has a gated structure, the ends of the cylinder being occluded by the N-termini of the alpha-subunits. Is capped by the proteasome-associated ATPase, ARC.

The protein resides in the cytoplasm. It carries out the reaction Cleavage of peptide bonds with very broad specificity.. Its pathway is protein degradation; proteasomal Pup-dependent pathway. Its activity is regulated as follows. The formation of the proteasomal ATPase ARC-20S proteasome complex, likely via the docking of the C-termini of ARC into the intersubunit pockets in the alpha-rings, may trigger opening of the gate for substrate entry. Interconversion between the open-gate and close-gate conformations leads to a dynamic regulation of the 20S proteasome proteolysis activity. Component of the proteasome core, a large protease complex with broad specificity involved in protein degradation. The sequence is that of Proteasome subunit beta 1 from Streptomyces avermitilis (strain ATCC 31267 / DSM 46492 / JCM 5070 / NBRC 14893 / NCIMB 12804 / NRRL 8165 / MA-4680).